The primary structure comprises 207 residues: MKILVLASSSQRRIELLRKLGADFIVIPPRITERIYDDPAKTVLENAFSKANYALVYAPENSIIIGMDTVIFSHELGVIGKPTTIEEATHILKLLRGKWHSVYTGVYIIEKNNLKYKSFIEETRVKMRNFSDEELTLYISSLEPLMKAGGYAIQGLGALLIETIVGDYYNVVGIPITKLYITLKKYFGVDLLREAVRKRVVGKTRTI.

The active-site Proton acceptor is aspartate 68.

Belongs to the Maf family. YhdE subfamily. A divalent metal cation is required as a cofactor.

The protein resides in the cytoplasm. It catalyses the reaction dTTP + H2O = dTMP + diphosphate + H(+). The catalysed reaction is UTP + H2O = UMP + diphosphate + H(+). Nucleoside triphosphate pyrophosphatase that hydrolyzes dTTP and UTP. May have a dual role in cell division arrest and in preventing the incorporation of modified nucleotides into cellular nucleic acids. This is dTTP/UTP pyrophosphatase from Staphylothermus marinus (strain ATCC 43588 / DSM 3639 / JCM 9404 / F1).